A 2163-amino-acid chain; its full sequence is Myosin-VIIa (2163 aa).

One can recognise a Myosin motor domain in the interval 58-728 (QGVEDMISLG…HDLFLEQERD (671 aa)). ATP is bound at residue 151 to 158 (GESGAGKT). Actin-binding stretches follow at residues 607–629 (LDSL…KPNE) and 707–721 (QLGH…AHDL). 4 IQ domains span residues 731–753 (LTRK…RFLR), 754–783 (MRQA…GYMR), 800–822 (LRGH…EYGL), and 823–852 (KMWA…EYRR). The stretch at 886–914 (RLNEIERKEIEQELEERRRVEVKKNIIND) forms a coiled coil. Residues 937–958 (PDSSSEAPTPHGGRETSVFNDL) form a disordered region. Positions 1003–1239 (YSRKPLKHPL…PSWLELQATK (237 aa)) constitute a MyTH4 1 domain. The FERM 1 domain occupies 1244–1554 (IMLPITFMDG…YFLEGLKKRS (311 aa)). The 70-residue stretch at 1552–1621 (KRSKFVIALQ…PAEIVYVLPS (70 aa)) folds into the SH3 domain. In terms of domain architecture, MyTH4 2 spans 1697–1845 (YSREPLKQPL…PHQVEVEAIQ (149 aa)). The region spanning 1851 to 2154 (IFHKVYFPDD…SYISLMLTNM (304 aa)) is the FERM 2 domain.

The protein belongs to the TRAFAC class myosin-kinesin ATPase superfamily. Myosin family. In terms of assembly, homodimerizes in a two headed molecule through the formation of a coiled-coil rod.

The protein localises to the cytoplasm. In terms of biological role, myosins are actin-based motor molecules with ATPase activity. Unconventional myosins serve in intracellular movements: can function in cells as a single-molecule cargo transporter. A very slow and high-duty-ratio motor, may be suitable for tension maintenance of actin filaments. Their highly divergent tails are presumed to bind to membranous compartments, which would be moved relative to actin filaments. Plays a key role in the formation of cellular projections and other actin-based functions required for embryonic and larval viability. Necessary for auditory transduction: plays a role in Johnston organ (JO) organization by functioning in scolopidial apical attachment and therefore to acoustic stimulus propagation from the antenna a2/a3 joint to transducing elements. The chain is Myosin-VIIa from Aedes aegypti (Yellowfever mosquito).